The following is a 366-amino-acid chain: Chorismate synthase (366 aa).

Residues Arg48 and Arg54 each coordinate NADP(+). FMN contacts are provided by residues 125-127, 238-239, Gly278, 293-297, and Arg319; these read RSS, NA, and KPTSS.

The protein belongs to the chorismate synthase family. In terms of assembly, homotetramer. FMNH2 is required as a cofactor.

The catalysed reaction is 5-O-(1-carboxyvinyl)-3-phosphoshikimate = chorismate + phosphate. The protein operates within metabolic intermediate biosynthesis; chorismate biosynthesis; chorismate from D-erythrose 4-phosphate and phosphoenolpyruvate: step 7/7. In terms of biological role, catalyzes the anti-1,4-elimination of the C-3 phosphate and the C-6 proR hydrogen from 5-enolpyruvylshikimate-3-phosphate (EPSP) to yield chorismate, which is the branch point compound that serves as the starting substrate for the three terminal pathways of aromatic amino acid biosynthesis. This reaction introduces a second double bond into the aromatic ring system. The sequence is that of Chorismate synthase from Ralstonia nicotianae (strain ATCC BAA-1114 / GMI1000) (Ralstonia solanacearum).